Reading from the N-terminus, the 111-residue chain is Large ribosomal subunit protein uL24 (111 aa).

The segment covering 48–65 (EKPSRSNREGGRTEREAP) has biased composition (basic and acidic residues). The tract at residues 48-111 (EKPSRSNREG…AKTTGEELDD (64 aa)) is disordered. The segment covering 69–80 (SNVNPIDSNGES) has biased composition (polar residues). Over residues 86-95 (KKVEDPDTGR) the composition is skewed to basic and acidic residues.

The protein belongs to the universal ribosomal protein uL24 family. As to quaternary structure, part of the 50S ribosomal subunit.

Functionally, one of two assembly initiator proteins, it binds directly to the 5'-end of the 23S rRNA, where it nucleates assembly of the 50S subunit. In terms of biological role, one of the proteins that surrounds the polypeptide exit tunnel on the outside of the subunit. The protein is Large ribosomal subunit protein uL24 of Salinibacter ruber (strain DSM 13855 / M31).